The chain runs to 335 residues: MKDIFEKLAAQENLTEAEITAVAEKIFKGELSEAQIAAFLMALKIKGETPEEILGLVKTIKKNAAVIPSQTSDAMDNCGTGGDKSFSFNISTTCSFVLAAGGIHIAKHGNRSISSKSGSADVLEELGINVVLAPEKLAQVLDETGIVFLFAQKMHPAMRYISPARQALGIPTVMNLIGPLTHPMDLETQLLGLYQADLQDDLAQVLKLLGRKRAVIITGPDNMDEAALYGKNHYTLLDNGQISQGSFTFEDFDMPKVTLEDIKGGDAKENAQILVSVLKNEPSPYLETTLLNAGLGFYANGKVDSIKEGIDLAREVIASGKAYAKLKALQEAQVD.

Residues Gly-79, 82 to 83 (GD), Ser-87, 89 to 92 (NIST), 107 to 115 (KHGNRSISS), and Ser-119 each bind 5-phospho-alpha-D-ribose 1-diphosphate. Gly-79 contributes to the anthranilate binding site. Ser-91 contacts Mg(2+). Anthranilate is bound at residue Asn-110. Arg-165 contacts anthranilate. The Mg(2+) site is built by Asp-224 and Glu-225.

This sequence belongs to the anthranilate phosphoribosyltransferase family. As to quaternary structure, homodimer. The cofactor is Mg(2+).

The catalysed reaction is N-(5-phospho-beta-D-ribosyl)anthranilate + diphosphate = 5-phospho-alpha-D-ribose 1-diphosphate + anthranilate. It participates in amino-acid biosynthesis; L-tryptophan biosynthesis; L-tryptophan from chorismate: step 2/5. Catalyzes the transfer of the phosphoribosyl group of 5-phosphorylribose-1-pyrophosphate (PRPP) to anthranilate to yield N-(5'-phosphoribosyl)-anthranilate (PRA). This chain is Anthranilate phosphoribosyltransferase, found in Streptococcus mutans serotype c (strain ATCC 700610 / UA159).